The following is a 526-amino-acid chain: Nucleobase-ascorbate transporter 4 (526 aa).

12 helical membrane-spanning segments follow: residues I42–G62, V69–S89, L91–S111, I131–W151, F157–F177, I186–L206, F217–G237, A282–A302, R359–L381, I388–F410, F420–L440, and V457–L477.

The protein belongs to the nucleobase:cation symporter-2 (NCS2) (TC 2.A.40) family. As to expression, highly expressed in the root central cylinder. Expressed in the filaments and stigmatic papillae of pollinated flowers and developing siliques.

It is found in the membrane. This is Nucleobase-ascorbate transporter 4 (NAT4) from Arabidopsis thaliana (Mouse-ear cress).